The chain runs to 581 residues: Proline--tRNA ligase (581 aa).

Belongs to the class-II aminoacyl-tRNA synthetase family. ProS type 1 subfamily. Homodimer.

It is found in the cytoplasm. The enzyme catalyses tRNA(Pro) + L-proline + ATP = L-prolyl-tRNA(Pro) + AMP + diphosphate. In terms of biological role, catalyzes the attachment of proline to tRNA(Pro) in a two-step reaction: proline is first activated by ATP to form Pro-AMP and then transferred to the acceptor end of tRNA(Pro). As ProRS can inadvertently accommodate and process non-cognate amino acids such as alanine and cysteine, to avoid such errors it has two additional distinct editing activities against alanine. One activity is designated as 'pretransfer' editing and involves the tRNA(Pro)-independent hydrolysis of activated Ala-AMP. The other activity is designated 'posttransfer' editing and involves deacylation of mischarged Ala-tRNA(Pro). The misacylated Cys-tRNA(Pro) is not edited by ProRS. The polypeptide is Proline--tRNA ligase (Kosmotoga olearia (strain ATCC BAA-1733 / DSM 21960 / TBF 19.5.1)).